Here is a 247-residue protein sequence, read N- to C-terminus: uncharacterized protein (247 aa).

Composition is skewed to low complexity over residues 1 to 12 (MFSPQQPMRNYP) and 21 to 43 (PNQR…AQQQ). Disordered stretches follow at residues 1–43 (MFSP…AQQQ) and 157–247 (LSKS…RLYI). Composition is skewed to basic and acidic residues over residues 170–196 (ESEK…DGNK) and 210–229 (KTTD…KKEA).

This is an uncharacterized protein from Bacillus subtilis (strain 168).